The following is a 533-amino-acid chain: MTIDWRQIAAKYCAHRDGSIPEPFKIKTLPKDTVLNVTKIPSECGLLTPKEIELTEKYDATALAEMIKDRKVTSVELVTAFCKRAAIAQQLVNCVNELFYEEALARAAELDEYYAKTGSLVGPLHGVPVSVKEHISIKNHTATASFLAKANIIAEKDSDLVATVRKAGAVFYCRTPQPQAIMHLETSSNLTGVTVNPFNRKLTPGGSSGGEGALLGIKASVLGIGSDIGGSIRSPAANNGLFGLRPSTLRLSRKGCQGAVSGQETILGVVGPLGRSVRDMNLFMKACIDSQPWLDDASLLPMPWRSVAPPKTLKVGIMRSDNVVNPQPPVARAMQMAIDQLSKNPDFDLVDVEPLDHKYSWDLISEMYWLDGGKVYYDLFNKVGEPILPLTEWIMHQPNVKPHDITAVWKLTAARDEYRNRYLKHLQAYGVDVLLTPVGPSPAPKLGEAKYWTYTSVWNLLDLPAVVFPVTTVDPKLDVKDESYIPMNEQDAANYETYSPEDYLDAPVSLQLVGKRWQDEELLAALDKIVSML.

Catalysis depends on charge relay system residues Lys-132 and Ser-207. Residue Ser-231 is the Acyl-ester intermediate of the active site.

Belongs to the amidase family.

The protein resides in the cytoplasm. The protein localises to the nucleus. The enzyme catalyses a monocarboxylic acid amide + H2O = a monocarboxylate + NH4(+). This is Putative amidase C550.07 from Schizosaccharomyces pombe (strain 972 / ATCC 24843) (Fission yeast).